We begin with the raw amino-acid sequence, 266 residues long: Heat-inducible transcription repressor HrcA (266 aa).

It belongs to the HrcA family.

Negative regulator of class I heat shock genes (grpE-dnaK-dnaJ and groELS operons). Prevents heat-shock induction of these operons. In Helicobacter pylori (strain ATCC 700392 / 26695) (Campylobacter pylori), this protein is Heat-inducible transcription repressor HrcA.